Consider the following 63-residue polypeptide: 2-hydroxymuconate tautomerase (63 aa).

Catalysis depends on Pro-2, which acts as the Proton acceptor; via imino nitrogen.

Belongs to the 4-oxalocrotonate tautomerase family. As to quaternary structure, homohexamer.

It carries out the reaction (2Z,4E)-2-hydroxyhexa-2,4-dienedioate = (3E)-2-oxohex-3-enedioate. It functions in the pathway aromatic compound metabolism; salicylate degradation. Catalyzes the ketonization of 2-hydroxymuconate stereoselectively to yield 2-oxo-3-hexenedioate. The chain is 2-hydroxymuconate tautomerase (nahJ) from Pseudomonas putida (Arthrobacter siderocapsulatus).